The chain runs to 744 residues: Polyadenylate-binding protein, cytoplasmic and nuclear (744 aa).

Positions 1–11 (MSEVANSTSPV) are enriched in polar residues. Residues 1–42 (MSEVANSTSPVQDGADANGAQINTNVPAASGDAPTPTTAAQQ) are disordered. The span at 33 to 42 (APTPTTAAQQ) shows a compositional bias: low complexity. RRM domains follow at residues 48–126 (ASLY…WSQR), 136–213 (GNVF…HHIP), 229–306 (TNIY…RAQK), and 332–462 (VNLY…LAQR). Disordered regions lie at residues 368 to 411 (EEKK…AGDK), 527 to 550 (GRGAGFPGGMPGQQGGRGGPNAQQ), 607 to 651 (IAGG…PGVD), and 723 to 744 (VKNKEGDGEKEAPKEESKEEKA). A compositionally biased stretch (basic and acidic residues) spans 376 to 397 (KEVKEEKKEDEKKEDEEAKEGS). Composition is skewed to gly residues over residues 527 to 545 (GRGAGFPGGMPGQQGGRGG), 609 to 632 (GGPGIRGGQGGFPQGGRGAPGGRG), and 640 to 649 (PQGGRPGGPG). Residues 647–724 (GPGVDMSVLS…AMSVYDEYVK (78 aa)) enclose the PABC domain.

The protein belongs to the polyadenylate-binding protein type-1 family.

The protein resides in the cytoplasm. The protein localises to the nucleus. Its function is as follows. Binds the poly(A) tail of mRNA. Appears to be an important mediator of the multiple roles of the poly(A) tail in mRNA biogenesis, stability and translation. In the nucleus, involved in both mRNA cleavage and polyadenylation. Is also required for efficient mRNA export to the cytoplasm. Acts in concert with a poly(A)-specific nuclease (PAN) to affect poly(A) tail shortening, which may occur concomitantly with either nucleocytoplasmic mRNA transport or translational initiation. In the cytoplasm, stimulates translation initiation and regulates mRNA decay through translation termination-coupled poly(A) shortening, probably mediated by PAN. This Phaeosphaeria nodorum (strain SN15 / ATCC MYA-4574 / FGSC 10173) (Glume blotch fungus) protein is Polyadenylate-binding protein, cytoplasmic and nuclear (PAB1).